The sequence spans 95 residues: Large ribosomal subunit protein eL42 (95 aa).

Zn(2+) is bound by residues C11, C14, C71, and C74. The segment at 11–74 (CPRCNTHTEH…QVLVITCTVC (64 aa)) adopts a C4-type zinc-finger fold.

This sequence belongs to the eukaryotic ribosomal protein eL42 family. Part of the 50S ribosomal subunit. Zn(2+) serves as cofactor.

Its function is as follows. Binds to the 23S rRNA. The protein is Large ribosomal subunit protein eL42 of Aeropyrum pernix (strain ATCC 700893 / DSM 11879 / JCM 9820 / NBRC 100138 / K1).